A 560-amino-acid chain; its full sequence is DNA ligase B (560 aa).

Residue lysine 124 is the N6-AMP-lysine intermediate of the active site.

It belongs to the NAD-dependent DNA ligase family. LigB subfamily.

The enzyme catalyses NAD(+) + (deoxyribonucleotide)n-3'-hydroxyl + 5'-phospho-(deoxyribonucleotide)m = (deoxyribonucleotide)n+m + AMP + beta-nicotinamide D-nucleotide.. Its function is as follows. Catalyzes the formation of phosphodiester linkages between 5'-phosphoryl and 3'-hydroxyl groups in double-stranded DNA using NAD as a coenzyme and as the energy source for the reaction. The sequence is that of DNA ligase B from Escherichia coli O1:K1 / APEC.